The following is a 200-amino-acid chain: Endoribonuclease YbeY (200 aa).

Positions 120, 124, and 130 each coordinate Zn(2+).

It belongs to the endoribonuclease YbeY family. Requires Zn(2+) as cofactor.

It localises to the cytoplasm. Functionally, single strand-specific metallo-endoribonuclease involved in late-stage 70S ribosome quality control and in maturation of the 3' terminus of the 16S rRNA. The sequence is that of Endoribonuclease YbeY from Corynebacterium efficiens (strain DSM 44549 / YS-314 / AJ 12310 / JCM 11189 / NBRC 100395).